The primary structure comprises 192 residues: Inosine triphosphate pyrophosphatase (192 aa).

Thr-10–Lys-15 provides a ligand contact to ITP. Position 43 (Glu-43) interacts with Mg(2+). ITP contacts are provided by residues Lys-56, Asp-74–Thr-75, Lys-91, Phe-149–Asp-152, Lys-173, and His-178–Arg-179.

The protein belongs to the HAM1 NTPase family. In terms of assembly, homodimer. The cofactor is Mg(2+). Mn(2+) is required as a cofactor.

The protein localises to the cytoplasm. It localises to the nucleus. It catalyses the reaction ITP + H2O = IMP + diphosphate + H(+). It carries out the reaction dITP + H2O = dIMP + diphosphate + H(+). The enzyme catalyses XTP + H2O = XMP + diphosphate + H(+). Pyrophosphatase that hydrolyzes non-canonical purine nucleotides such as inosine triphosphate (ITP), deoxyinosine triphosphate (dITP) or xanthosine 5'-triphosphate (XTP) to their respective monophosphate derivatives. The enzyme does not distinguish between the deoxy- and ribose forms. Probably excludes non-canonical purines from RNA and DNA precursor pools, thus preventing their incorporation into RNA and DNA and avoiding chromosomal lesions. The sequence is that of Inosine triphosphate pyrophosphatase from Candida glabrata (strain ATCC 2001 / BCRC 20586 / JCM 3761 / NBRC 0622 / NRRL Y-65 / CBS 138) (Yeast).